Reading from the N-terminus, the 91-residue chain is Non-specific lipid-transfer protein 1 (91 aa).

4 cysteine pairs are disulfide-bonded: cysteine 4/cysteine 51, cysteine 14/cysteine 28, cysteine 29/cysteine 74, and cysteine 49/cysteine 88.

In terms of tissue distribution, detected in seeds (at protein level).

In terms of biological role, plant non-specific lipid-transfer proteins transfer phospholipids as well as galactolipids across membranes. May play a role in wax or cutin deposition in the cell walls of expanding epidermal cells and certain secretory tissues. In Trachyspermum ammi (Ajowan caraway), this protein is Non-specific lipid-transfer protein 1.